Consider the following 70-residue polypeptide: Small ribosomal subunit protein bS21 (70 aa).

It belongs to the bacterial ribosomal protein bS21 family.

In Helicobacter pylori (strain P12), this protein is Small ribosomal subunit protein bS21.